A 110-amino-acid polypeptide reads, in one-letter code: Protein YcgL (110 aa).

The 85-residue stretch at 14-98 (MFCVIYRSSK…PPEDLLKQHL (85 aa)) folds into the YcgL domain. Residues 88 to 110 (PPPEDLLKQHLSSVGQNTSPADR) form a disordered region. A compositionally biased stretch (polar residues) spans 97-110 (HLSSVGQNTSPADR).

The polypeptide is Protein YcgL (Salmonella paratyphi A (strain ATCC 9150 / SARB42)).